The following is a 479-amino-acid chain: Probable cytosol aminopeptidase (479 aa).

Mn(2+) contacts are provided by Lys247 and Asp252. Lys259 is a catalytic residue. Mn(2+) is bound by residues Asp270, Asp329, and Glu331. Residue Arg333 is part of the active site.

Belongs to the peptidase M17 family. It depends on Mn(2+) as a cofactor.

The protein resides in the cytoplasm. It catalyses the reaction Release of an N-terminal amino acid, Xaa-|-Yaa-, in which Xaa is preferably Leu, but may be other amino acids including Pro although not Arg or Lys, and Yaa may be Pro. Amino acid amides and methyl esters are also readily hydrolyzed, but rates on arylamides are exceedingly low.. The catalysed reaction is Release of an N-terminal amino acid, preferentially leucine, but not glutamic or aspartic acids.. In terms of biological role, presumably involved in the processing and regular turnover of intracellular proteins. Catalyzes the removal of unsubstituted N-terminal amino acids from various peptides. The polypeptide is Probable cytosol aminopeptidase (Vesicomyosocius okutanii subsp. Calyptogena okutanii (strain HA)).